The primary structure comprises 242 residues: 1-(5-phosphoribosyl)-5-[(5-phosphoribosylamino)methylideneamino] imidazole-4-carboxamide isomerase (242 aa).

Asp8 acts as the Proton acceptor in catalysis. Asp129 (proton donor) is an active-site residue.

This sequence belongs to the HisA/HisF family.

It localises to the cytoplasm. It carries out the reaction 1-(5-phospho-beta-D-ribosyl)-5-[(5-phospho-beta-D-ribosylamino)methylideneamino]imidazole-4-carboxamide = 5-[(5-phospho-1-deoxy-D-ribulos-1-ylimino)methylamino]-1-(5-phospho-beta-D-ribosyl)imidazole-4-carboxamide. It participates in amino-acid biosynthesis; L-histidine biosynthesis; L-histidine from 5-phospho-alpha-D-ribose 1-diphosphate: step 4/9. This chain is 1-(5-phosphoribosyl)-5-[(5-phosphoribosylamino)methylideneamino] imidazole-4-carboxamide isomerase, found in Dictyoglomus thermophilum (strain ATCC 35947 / DSM 3960 / H-6-12).